Here is a 364-residue protein sequence, read N- to C-terminus: Peptide chain release factor 2 (364 aa).

Gln-251 is subject to N5-methylglutamine.

This sequence belongs to the prokaryotic/mitochondrial release factor family. In terms of processing, methylated by PrmC. Methylation increases the termination efficiency of RF2.

It localises to the cytoplasm. Peptide chain release factor 2 directs the termination of translation in response to the peptide chain termination codons UGA and UAA. The protein is Peptide chain release factor 2 of Sulfurovum sp. (strain NBC37-1).